Consider the following 185-residue polypeptide: Tetrahydromethanopterin S-methyltransferase subunit A 2 (185 aa).

The Cytoplasmic segment spans residues 1 to 21; sequence MVDKKVDKKPVPEDWPHIVGD. The chain crosses the membrane as a helical span at residues 22 to 38; sequence YVVGDAESPVAVVTLGS. Residues 39 to 185 are Extracellular-facing; the sequence is HMEDEPVRAG…LNKNKPDENT (147 aa). Residue His-88 participates in 5-hydroxybenzimidazolylcob(I)amide binding.

The protein belongs to the MtrA family. In terms of assembly, the complex is composed of 8 subunits; MtrA, MtrB, MtrC, MtrD, MtrE, MtrF, MtrG and MtrH. 5-hydroxybenzimidazolylcob(I)amide is required as a cofactor.

The protein resides in the cell membrane. It catalyses the reaction 5-methyl-5,6,7,8-tetrahydromethanopterin + coenzyme M + 2 Na(+)(in) = 5,6,7,8-tetrahydromethanopterin + methyl-coenzyme M + 2 Na(+)(out). The protein operates within one-carbon metabolism; methanogenesis from CO(2); methyl-coenzyme M from 5,10-methylene-5,6,7,8-tetrahydromethanopterin: step 2/2. In terms of biological role, part of a complex that catalyzes the formation of methyl-coenzyme M and tetrahydromethanopterin from coenzyme M and methyl-tetrahydromethanopterin. This is an energy-conserving, sodium-ion translocating step. The protein is Tetrahydromethanopterin S-methyltransferase subunit A 2 of Methanothermobacter marburgensis (strain ATCC BAA-927 / DSM 2133 / JCM 14651 / NBRC 100331 / OCM 82 / Marburg) (Methanobacterium thermoautotrophicum).